The sequence spans 610 residues: DNA mismatch repair protein MutL (610 aa).

Belongs to the DNA mismatch repair MutL/HexB family.

Functionally, this protein is involved in the repair of mismatches in DNA. It is required for dam-dependent methyl-directed DNA mismatch repair. May act as a 'molecular matchmaker', a protein that promotes the formation of a stable complex between two or more DNA-binding proteins in an ATP-dependent manner without itself being part of a final effector complex. In Rickettsia canadensis (strain McKiel), this protein is DNA mismatch repair protein MutL.